The chain runs to 195 residues: Probable GTP-binding protein EngB (195 aa).

The EngB-type G domain maps to 22-195; that stretch reads GLPEIALAGR…WGAIKKMISR (174 aa). GTP-binding positions include 30–37, 57–61, 75–78, 142–145, and 174–176; these read GRSNVGKS, GKTQT, DVPG, TKAD, and FSS. The Mg(2+) site is built by Ser37 and Thr59.

This sequence belongs to the TRAFAC class TrmE-Era-EngA-EngB-Septin-like GTPase superfamily. EngB GTPase family. Requires Mg(2+) as cofactor.

In terms of biological role, necessary for normal cell division and for the maintenance of normal septation. The polypeptide is Probable GTP-binding protein EngB (Bacillus velezensis (strain DSM 23117 / BGSC 10A6 / LMG 26770 / FZB42) (Bacillus amyloliquefaciens subsp. plantarum)).